An 869-amino-acid chain; its full sequence is Valine--tRNA ligase (869 aa).

Residues 47 to 57 carry the 'HIGH' region motif; that stretch reads PYPTGNFHIGN. The 'KMSKS' region motif lies at 521–525; that stretch reads KMSKS. Lys-524 contributes to the ATP binding site.

The protein belongs to the class-I aminoacyl-tRNA synthetase family. ValS type 2 subfamily.

It is found in the cytoplasm. The enzyme catalyses tRNA(Val) + L-valine + ATP = L-valyl-tRNA(Val) + AMP + diphosphate. Catalyzes the attachment of valine to tRNA(Val). As ValRS can inadvertently accommodate and process structurally similar amino acids such as threonine, to avoid such errors, it has a 'posttransfer' editing activity that hydrolyzes mischarged Thr-tRNA(Val) in a tRNA-dependent manner. This chain is Valine--tRNA ligase, found in Methanosarcina acetivorans (strain ATCC 35395 / DSM 2834 / JCM 12185 / C2A).